Consider the following 275-residue polypeptide: Beta-lactamase OXA-3 (275 aa).

The signal sequence occupies residues 1-21 (MAIRIFAILFSTFVFGTFAHA). Ser-72 (acyl-ester intermediate) is an active-site residue. Residue Lys-75 is modified to N6-carboxylysine. Residue 210–212 (KTG) coordinates substrate.

Belongs to the class-D beta-lactamase family.

The catalysed reaction is a beta-lactam + H2O = a substituted beta-amino acid. This is an oxacillin-hydrolyzing beta-lactamase. The polypeptide is Beta-lactamase OXA-3 (bla) (Pseudomonas aeruginosa).